The following is a 636-amino-acid chain: Protein cueball (636 aa).

Positions 1-27 are cleaved as a signal peptide; that stretch reads MKLCTSQQFGVAVLFIVLNICSPLADA. Residues 28–517 are Extracellular-facing; sequence SPIAWDFAVT…ADGPSSLRSG (490 aa). N-linked (GlcNAc...) asparagine glycans are attached at residues Asn-83 and Asn-109. 3 LDL-receptor class B repeats span residues 122–169, 170–214, and 215–260; these read RNLF…DICR, RQLY…DQLS, and DRIF…TEDT. N-linked (GlcNAc...) asparagine glycosylation occurs at Asn-190. Asn-285 and Asn-339 each carry an N-linked (GlcNAc...) asparagine glycan. EGF-like domains are found at residues 350–384 and 419–456; these read RMDALEREHCLNGASYMSRGNFCICPVGYKGARCE and EYYKCNGHCLNDGHCLVDKESGELSCDCRENFTGTRCE. Cystine bridges form between Cys-359-Cys-372, Cys-374-Cys-383, Cys-423-Cys-433, Cys-427-Cys-444, and Cys-446-Cys-455. Asn-449, Asn-458, and Asn-493 each carry an N-linked (GlcNAc...) asparagine glycan. The helical transmembrane segment at 518-538 threads the bilayer; that stretch reads SVIIVLVVGIVSSLALVAVIV. At 539–636 the chain is on the cytoplasmic side; the sequence is HGLRLIYKPK…IHNMEDDLLT (98 aa).

Belongs to the cueball family.

The protein localises to the cell membrane. In terms of biological role, has a role in spermatogenesis and oogenesis. In Drosophila virilis (Fruit fly), this protein is Protein cueball.